We begin with the raw amino-acid sequence, 316 residues long: Ribosomal protein L11 methyltransferase (316 aa).

Residues T160, G181, D203, and N246 each contribute to the S-adenosyl-L-methionine site.

The protein belongs to the methyltransferase superfamily. PrmA family.

The protein localises to the cytoplasm. The catalysed reaction is L-lysyl-[protein] + 3 S-adenosyl-L-methionine = N(6),N(6),N(6)-trimethyl-L-lysyl-[protein] + 3 S-adenosyl-L-homocysteine + 3 H(+). Functionally, methylates ribosomal protein L11. This chain is Ribosomal protein L11 methyltransferase, found in Heliobacterium modesticaldum (strain ATCC 51547 / Ice1).